Here is a 211-residue protein sequence, read N- to C-terminus: Endo-1,4-beta-xylanase 5 (211 aa).

Residues 1-16 form the signal peptide; the sequence is MKVTAAFASLLLTAFA. In terms of domain architecture, GH11 spans 19-210; sequence APEPVLVSRS…GVGSASVTIS (192 aa). Glu-106 serves as the catalytic Nucleophile. The active-site Proton donor is Glu-197.

This sequence belongs to the glycosyl hydrolase 11 (cellulase G) family.

The protein localises to the secreted. It catalyses the reaction Endohydrolysis of (1-&gt;4)-beta-D-xylosidic linkages in xylans.. It functions in the pathway glycan degradation; xylan degradation. Its function is as follows. Endo-1,4-beta-xylanase involved in the hydrolysis of xylan, a major structural heterogeneous polysaccharide found in plant biomass representing the second most abundant polysaccharide in the biosphere, after cellulose. In Aspergillus niger, this protein is Endo-1,4-beta-xylanase 5 (XYN5).